We begin with the raw amino-acid sequence, 87 residues long: Small ribosomal subunit protein bS20 (87 aa).

Residues 1-22 form a disordered region; sequence MANSAGSKKRARQAVKSRAHNG. Residues 7 to 19 show a composition bias toward basic residues; the sequence is SKKRARQAVKSRA.

It belongs to the bacterial ribosomal protein bS20 family.

Its function is as follows. Binds directly to 16S ribosomal RNA. The protein is Small ribosomal subunit protein bS20 of Marinomonas sp. (strain MWYL1).